The chain runs to 94 residues: Neutrophil defensin 1 (94 aa).

The N-terminal stretch at 1–19 is a signal peptide; the sequence is MRTLAILAAILLVALQAQA. Positions 20-38 are excised as a propeptide; sequence EPLQARADEVAAAPEQIAA. Cystine bridges form between cysteine 66–cysteine 94, cysteine 68–cysteine 83, and cysteine 73–cysteine 93. Arginine 78 is modified (ADP-ribosylarginine; by ART1). Phosphotyrosine is present on tyrosine 85. Arginine 88 is subject to ADP-ribosylarginine; by ART1.

It belongs to the alpha-defensin family. In terms of assembly, tetramer. Dimer. Interacts with RETN. As to quaternary structure, (Microbial infection) Interacts with HIV-1 surface protein gp120. (Microbial infection) Interacts with herpes virus 1 (HHV1) envelope glycoprotein B; this interaction inhibits viral infection. ADP-ribosylation drastically reduces cytotoxic and antibacterial activities, and enhances IL8 production. In terms of processing, phosphorylation at Tyr-85 has been found in some cancer cell lines, and interferes with ADP-ribosylation.

The protein resides in the secreted. Functionally, effector molecule of the innate immune system that acts via antibiotic-like properties against a broad array of infectious agents including bacteria, fungi, and viruses or by promoting the activation and maturation of some APCs. Interacts with the essential precursor of cell wall synthesis lipid II to inhibit bacterial cell wall synthesis. Inhibits adenovirus infection via inhibition of viral disassembly at the vertex region, thereby restricting the release of internal capsid protein pVI, which is required for endosomal membrane penetration during cell entry. In addition, interaction with adenovirus capsid leads to the redirection of viral particles to TLR4 thereby promoting a NLRP3-mediated inflammasome response and interleukin 1-beta (IL-1beta) release. Induces the production of proinflammatory cytokines including type I interferon (IFN) in plasmacytoid dendritic cells (pDCs) by triggering the degradation of NFKBIA and nuclear translocation of IRF1, both of which are required for activation of pDCs. The polypeptide is Neutrophil defensin 1 (DEFA1) (Homo sapiens (Human)).